The primary structure comprises 342 residues: viral G-protein coupled receptor (342 aa).

Topologically, residues Met-1–Val-51 are extracellular. Asn-18, Asn-22, and Asn-31 each carry an N-linked (GlcNAc...) asparagine; by host glycan. The helical transmembrane segment at Gly-52–Phe-72 threads the bilayer. Topologically, residues Cys-73 to Asn-92 are cytoplasmic. Residues Ser-93–Ile-113 form a helical membrane-spanning segment. Residues Ser-114 to Glu-121 lie on the Extracellular side of the membrane. Residues Ile-122–Val-142 traverse the membrane as a helical segment. Topologically, residues Arg-143–Ser-159 are cytoplasmic. A helical transmembrane segment spans residues Leu-160–Cys-180. At Arg-181–Thr-217 the chain is on the extracellular side. A helical transmembrane segment spans residues Ala-218–Val-238. The Cytoplasmic portion of the chain corresponds to Arg-239 to Gly-251. A helical membrane pass occupies residues Val-252–Leu-272. At Leu-273–Asn-293 the chain is on the extracellular side. Residues Val-294–Tyr-314 traverse the membrane as a helical segment. The Cytoplasmic portion of the chain corresponds to Ser-315–Thr-342.

This sequence belongs to the G-protein coupled receptor 1 family. As to quaternary structure, interacts with protein K7; this interaction promotes vGPCR proteasomal degradation. Interacts with host CADM1; this interaction is essential for chronic NF-kappa-B activation.

Its subcellular location is the host cell membrane. Receptor that signals constitutively via several signaling pathways including PI3K/AKT as well as mitogen- and stress-activated/MAP kinases. Promotes host cell proliferation and survival, modulates cell migration, stimulates angiogenesis, and recruits inflammatory cells, both in expressing cells and in neighboring cells. Maintains chronic activation of NF-kappa-B via interaction with host CADM1. This is viral G-protein coupled receptor (ORF74) from Human herpesvirus 8 type P (isolate GK18) (HHV-8).